Consider the following 526-residue polypeptide: MNIVNSLDLSNITTNHVAAAVCAGIAVYAIVAGRNRGKKYPPGPKGHPLIGSLFEMPIQNAHVVYKEWAKTYGDMIFFKVLGQPFLILSSEETITDLLDKRSTIYSSRPRMPMVVELMGWDYTLGLLPYGERWRFLRREFHRFMSPTAVSNYRQIQENSVYTFLNNLVESPEQFSKHLRLFYGSISMKVSYGINVKSAEDQYLLDAEGAMSGFMEAGIPGRFWVDLFPALKYVPSWMPGAEFKRKAARWARLNDISLERPFKHVLDQLKKGVASQSVSATLIEELPDQNSPDRKEKETIARNISATTFLAGIDTIHSTTQAFFYAMAQFPEVQKKAQAEIDAVVGDKRLPTFEDRDQLPYVNALVKELIRWSEVAPLGIYHSTTEDDEYKGYFIPKGTIVMTNAWSILTDPVTYPDPFAFKPERYLKNGVMNPDAPRPEDLAFGRGRRICPGRYLADETLFMTSVGVLAGFNISPPLDKSGKPIKLKNERVGTITLTPPKFECRIEPRSPAIRTMIHDTAESISAL.

N-linked (GlcNAc...) asparagine glycosylation is present at asparagine 11. Residues 12–31 form a helical membrane-spanning segment; that stretch reads ITTNHVAAAVCAGIAVYAIV. An N-linked (GlcNAc...) asparagine glycan is attached at asparagine 302. Cysteine 450 provides a ligand contact to heme.

It belongs to the cytochrome P450 family. Requires heme as cofactor.

Its subcellular location is the membrane. The protein operates within secondary metabolite biosynthesis. Its function is as follows. Cytochrome P450 monooxygenase; part of the gene cluster that mediates the biosynthesis of alpha-cuprenene and oxidized derivatives. The alpha-cuprenene synthase COP6 is the only sesquiterpene synthase identified in C.cinereus that appears to be part of a biosynthetic gene cluster and is highly specific since it catalyzes the cyclization of (2E,6E)-farnesyl diphosphate into only one product, alpha-cuprenene. The cytochrome P450 monooxygenase COX2 then oxidizes the cyclohexadiene ring of alpha-cuprenene at positions 1 and 4, yielding first alpha-cuparene, followed by alpha-cuparophenol and a further yet unidentified compound resulting from one additional oxidation step. The cytochrome P450 monooxygenase COX1 then likely catalyzes the oxidation at position 9 of the pentane ring of alpha-cuprenene to give the corresponding hydroxy or ketone derivatives. This chain is Cytochrome P450 monooxygenase COX2, found in Coprinopsis cinerea (strain Okayama-7 / 130 / ATCC MYA-4618 / FGSC 9003) (Inky cap fungus).